A 360-amino-acid chain; its full sequence is Peptide chain release factor 1 (360 aa).

Gln237 is subject to N5-methylglutamine.

This sequence belongs to the prokaryotic/mitochondrial release factor family. In terms of processing, methylated by PrmC. Methylation increases the termination efficiency of RF1.

It localises to the cytoplasm. In terms of biological role, peptide chain release factor 1 directs the termination of translation in response to the peptide chain termination codons UAG and UAA. In Pseudomonas putida (strain GB-1), this protein is Peptide chain release factor 1.